Consider the following 461-residue polypeptide: Argininosuccinate lyase (461 aa).

It belongs to the lyase 1 family. Argininosuccinate lyase subfamily.

It is found in the cytoplasm. The enzyme catalyses 2-(N(omega)-L-arginino)succinate = fumarate + L-arginine. The protein operates within amino-acid biosynthesis; L-arginine biosynthesis; L-arginine from L-ornithine and carbamoyl phosphate: step 3/3. The chain is Argininosuccinate lyase from Desulfitobacterium hafniense (strain DSM 10664 / DCB-2).